The chain runs to 451 residues: Trigger factor (451 aa).

The region spanning 165 to 250 (DDKLTIDFEG…LHQIQAREVL (86 aa)) is the PPIase FKBP-type domain.

The protein belongs to the FKBP-type PPIase family. Tig subfamily.

Its subcellular location is the cytoplasm. It carries out the reaction [protein]-peptidylproline (omega=180) = [protein]-peptidylproline (omega=0). Functionally, involved in protein export. Acts as a chaperone by maintaining the newly synthesized protein in an open conformation. Functions as a peptidyl-prolyl cis-trans isomerase. This chain is Trigger factor, found in Helicobacter acinonychis (strain Sheeba).